The primary structure comprises 246 residues: Alpha-amylase inhibitor 1 (246 aa).

Positions 1 to 23 (MIMASSKLLSLALFLALLSHANS) are cleaved as a signal peptide. Residues Asn35, Asn88, and Asn163 are each glycosylated (N-linked (GlcNAc...) asparagine). The propeptide occupies 240–246 (IVLNKIL).

It belongs to the leguminous lectin family. As to quaternary structure, heterodimer of chain 1 and chain 2. Proteolytic processing yields active form.

Its function is as follows. Lectin and alpha-amylase inhibitor. Acts as a defensive protein against insects. The chain is Alpha-amylase inhibitor 1 (LLP) from Phaseolus vulgaris (Kidney bean).